The sequence spans 478 residues: MARKTLRARRFFSLIFPFFFITSVYAEQTPESAKTVTVEAKNETFAPQHPDQYQSWKATSEQSAREDALAEDPRLVILWAGYPFSRDYNKPRGHAYAVTDVRETLRTGAPKTAEDGPLPMACWSCKSPDVARLIQQEGEDGYFHGKWARGGPEIVNDLGCADCHNTASDDFAQGKPALTLSRPYAERAMEAIGKPFDKAGRFDQQSMVCGQCHVEYYFDGKNKAVKFPWDEGMKVENMEQYYDTIAFSDWTNSLSKTPMLKAQHPEYETWSAGIHGRNNVTCIDCHMPKVQNAEGKLYTDHKIGNPFDNFAQTCANCHTQDKASLQKVVAERKQAIHDLKIKVEDQLVHAHFEAKAAWDAGATDAEMKPILNDIRHAQWRWDLAIASHGIHMHAPEEGLRMLGSAMDKAADARTKLARLLATKGITHEIPLPDISTKEKAQKAIGLNMQQINAEKQDFLKTVVPQWEDQARKNGLLSQ.

Residues 1–26 form the signal peptide; it reads MARKTLRARRFFSLIFPFFFITSVYA. Histidine 94 is a heme c binding site. Heme contacts are provided by cysteine 122, cysteine 125, and lysine 126. Residues cysteine 160, cysteine 163, histidine 164, cysteine 209, cysteine 212, and histidine 213 each contribute to the heme c site. Residues glutamate 215, tyrosine 216, lysine 261, and glutamine 263 each contribute to the Ca(2+) site. Residue tyrosine 216 participates in substrate binding. Substrate is bound at residue histidine 264. 9 residues coordinate heme c: histidine 275, cysteine 282, cysteine 285, histidine 286, histidine 301, cysteine 314, cysteine 317, histidine 318, and histidine 393.

It belongs to the cytochrome c-552 family. It depends on Ca(2+) as a cofactor. The cofactor is heme c.

It localises to the periplasm. It carries out the reaction 6 Fe(III)-[cytochrome c] + NH4(+) + 2 H2O = 6 Fe(II)-[cytochrome c] + nitrite + 8 H(+). It functions in the pathway nitrogen metabolism; nitrate reduction (assimilation). Catalyzes the reduction of nitrite to ammonia, consuming six electrons in the process. This is Cytochrome c-552 from Salmonella agona (strain SL483).